A 279-amino-acid chain; its full sequence is Diaminopimelate epimerase (279 aa).

Asparagine 13 and asparagine 66 together coordinate substrate. The Proton donor role is filled by cysteine 75. Residues 76-77 (GN), asparagine 162, asparagine 195, and 213-214 (ER) each bind substrate. The active-site Proton acceptor is the cysteine 222. A substrate-binding site is contributed by 223 to 224 (GT).

This sequence belongs to the diaminopimelate epimerase family. Homodimer.

The protein localises to the cytoplasm. The catalysed reaction is (2S,6S)-2,6-diaminopimelate = meso-2,6-diaminopimelate. The protein operates within amino-acid biosynthesis; L-lysine biosynthesis via DAP pathway; DL-2,6-diaminopimelate from LL-2,6-diaminopimelate: step 1/1. Catalyzes the stereoinversion of LL-2,6-diaminopimelate (L,L-DAP) to meso-diaminopimelate (meso-DAP), a precursor of L-lysine and an essential component of the bacterial peptidoglycan. The sequence is that of Diaminopimelate epimerase from Synechocystis sp. (strain ATCC 27184 / PCC 6803 / Kazusa).